A 246-amino-acid chain; its full sequence is Bis(5'-nucleosyl)-tetraphosphatase PrpE [asymmetrical] (246 aa).

The protein belongs to the PrpE family. Ni(2+) is required as a cofactor.

It catalyses the reaction P(1),P(4)-bis(5'-guanosyl) tetraphosphate + H2O = GMP + GTP + 2 H(+). Functionally, asymmetrically hydrolyzes Ap4p to yield AMP and ATP. This chain is Bis(5'-nucleosyl)-tetraphosphatase PrpE [asymmetrical], found in Bacillus cereus (strain ATCC 14579 / DSM 31 / CCUG 7414 / JCM 2152 / NBRC 15305 / NCIMB 9373 / NCTC 2599 / NRRL B-3711).